The sequence spans 315 residues: tRNA dimethylallyltransferase (315 aa).

13-20 provides a ligand contact to ATP; the sequence is GPTASGKT. 15–20 serves as a coordination point for substrate; the sequence is TASGKT. 3 interaction with substrate tRNA regions span residues 38–41, 162–166, and 245–250; these read DSAL, QRIQR, and RCVGYR.

It belongs to the IPP transferase family. In terms of assembly, monomer. The cofactor is Mg(2+).

It catalyses the reaction adenosine(37) in tRNA + dimethylallyl diphosphate = N(6)-dimethylallyladenosine(37) in tRNA + diphosphate. In terms of biological role, catalyzes the transfer of a dimethylallyl group onto the adenine at position 37 in tRNAs that read codons beginning with uridine, leading to the formation of N6-(dimethylallyl)adenosine (i(6)A). In Methylobacillus flagellatus (strain ATCC 51484 / DSM 6875 / VKM B-1610 / KT), this protein is tRNA dimethylallyltransferase.